Reading from the N-terminus, the 527-residue chain is DNA polymerase epsilon subunit 2 (527 aa).

Belongs to the DNA polymerase epsilon subunit B family. Component of the DNA polymerase epsilon complex consisting of four subunits: the catalytic subunit POLE and the accessory subunits POLE2, POLE3 and POLE4.

Its subcellular location is the nucleus. In terms of biological role, accessory component of the DNA polymerase epsilon complex. Participates in DNA repair and in chromosomal DNA replication. This chain is DNA polymerase epsilon subunit 2 (POLE2), found in Bos taurus (Bovine).